We begin with the raw amino-acid sequence, 307 residues long: Methionyl-tRNA formyltransferase (307 aa).

108–111 (SLLP) provides a ligand contact to (6S)-5,6,7,8-tetrahydrofolate.

This sequence belongs to the Fmt family.

It carries out the reaction L-methionyl-tRNA(fMet) + (6R)-10-formyltetrahydrofolate = N-formyl-L-methionyl-tRNA(fMet) + (6S)-5,6,7,8-tetrahydrofolate + H(+). Functionally, attaches a formyl group to the free amino group of methionyl-tRNA(fMet). The formyl group appears to play a dual role in the initiator identity of N-formylmethionyl-tRNA by promoting its recognition by IF2 and preventing the misappropriation of this tRNA by the elongation apparatus. This chain is Methionyl-tRNA formyltransferase, found in Stenotrophomonas maltophilia (strain K279a).